Here is a 431-residue protein sequence, read N- to C-terminus: MDLHVGKSRGLRGTVAVPGDKSISHRAVMLGALASGETIIENFLPGEDCLSTIDCFRKLGVEINGPDNNTVRVRGRGLDGLSEPVDVLDTGNSGTTMRLILGVLAGQPFFSVITGDSSLRRRPMGRVTGPLISMGAKIDGRQNGNLAPLAVRGGTLRPINFVSPVASAQVKSAVLLAGLFTDGVTAVTEAYRTRDHTERMLRAFGAGVEVSEGTVAVKGRPRLTGRKVKVPGDISSAAFLLVAASLIPGSDLTLTGVGVNPTRIGIIEVLSSMGAEIRLFNLREEEEPVADIRVRYNGRLCGTAVGGEIIPRLIDEVPALAVAAALAEGKTVIRDAAELKVKESDRIAAVAGMLAKFGADVEELPDGLLVRGSRALKGCVCESHGDHRIAMAAAVAGLLAEGKTIVRGAECISVSFPGFSDLLAKVMVDWQ.

Residues K21, S22, and R26 each coordinate 3-phosphoshikimate. Position 21 (K21) interacts with phosphoenolpyruvate. Phosphoenolpyruvate-binding residues include G94 and R122. The 3-phosphoshikimate site is built by S167, Q169, D315, and K342. Q169 is a phosphoenolpyruvate binding site. The active-site Proton acceptor is the D315. Phosphoenolpyruvate is bound by residues R346 and R388.

Belongs to the EPSP synthase family. Monomer.

It is found in the cytoplasm. It catalyses the reaction 3-phosphoshikimate + phosphoenolpyruvate = 5-O-(1-carboxyvinyl)-3-phosphoshikimate + phosphate. It participates in metabolic intermediate biosynthesis; chorismate biosynthesis; chorismate from D-erythrose 4-phosphate and phosphoenolpyruvate: step 6/7. Its function is as follows. Catalyzes the transfer of the enolpyruvyl moiety of phosphoenolpyruvate (PEP) to the 5-hydroxyl of shikimate-3-phosphate (S3P) to produce enolpyruvyl shikimate-3-phosphate and inorganic phosphate. The chain is 3-phosphoshikimate 1-carboxyvinyltransferase from Pelotomaculum thermopropionicum (strain DSM 13744 / JCM 10971 / SI).